A 126-amino-acid chain; its full sequence is uncharacterized protein (126 aa).

This is an uncharacterized protein from His1 virus (isolate Australia/Victoria) (His1V).